Reading from the N-terminus, the 515-residue chain is Protein disulfide-isomerase (515 aa).

A signal peptide spans 1–25; the sequence is MAISKVWISLLLALAVVLSAPAARA. Residues 26-150 enclose the Thioredoxin 1 domain; the sequence is EEAAAAEEAA…IVEYLKKQVG (125 aa). Active-site nucleophile residues include Cys68 and Cys71. Cys68 and Cys71 are oxidised to a cystine. Residue Asn283 is glycosylated (N-linked (GlcNAc...) asparagine). A Thioredoxin 2 domain is found at 346–489; the sequence is LKEQVEAGQI…IVDYIKKNKE (144 aa). Residues Cys412 and Cys415 each act as nucleophile in the active site. The cysteines at positions 412 and 415 are disulfide-linked. The segment covering 494-509 has biased composition (low complexity); the sequence is AAAAATEKAAEPAATE. The tract at residues 494–515 is disordered; sequence AAAAATEKAAEPAATEPLKDEL. The Prevents secretion from ER signature appears at 512–515; sequence KDEL.

It belongs to the protein disulfide isomerase family.

The protein localises to the endoplasmic reticulum lumen. The enzyme catalyses Catalyzes the rearrangement of -S-S- bonds in proteins.. Its function is as follows. Participates in the folding of proteins containing disulfide bonds, may be involved in glycosylation, prolyl hydroxylation and triglyceride transfer. The polypeptide is Protein disulfide-isomerase (PDI) (Triticum aestivum (Wheat)).